We begin with the raw amino-acid sequence, 736 residues long: Zinc finger MYND domain-containing protein 15 (736 aa).

Disordered stretches follow at residues Ser70–Pro94 and Leu109–Glu192. Acidic residues predominate over residues Glu110–Glu123. Basic and acidic residues-rich tracts occupy residues His124–Pro135 and Ala165–Arg185. Cys307, Cys310, Cys322, Cys325, Cys331, Cys335, His349, and Cys353 together coordinate Zn(2+). An MYND-type zinc finger spans residues Cys307–Cys353. Disordered stretches follow at residues Asp556–Arg583 and Gly696–Arg736. The segment covering Gly704–Pro718 has biased composition (pro residues). Residues Ala719 to Arg736 are compositionally biased toward basic residues.

As to quaternary structure, interacts with HDAC1, HDAC3, HDAC6 and, to a lesser extent, with HDAC7. As to expression, testis-specific. Expressed in pachytene spermatocytes and all developing spermatids, but not in Sertoli, nor Leydig cells (at protein level).

It is found in the nucleus. The protein resides in the cytoplasm. Acts as a transcriptional repressor through interaction with histone deacetylases (HDACs). May regulate haploid genes important for spermiogenesis. This chain is Zinc finger MYND domain-containing protein 15 (Zmynd15), found in Mus musculus (Mouse).